Consider the following 338-residue polypeptide: Aspartate--ammonia ligase (338 aa).

The protein belongs to the class-II aminoacyl-tRNA synthetase family. AsnA subfamily.

Its subcellular location is the cytoplasm. The enzyme catalyses L-aspartate + NH4(+) + ATP = L-asparagine + AMP + diphosphate + H(+). Its pathway is amino-acid biosynthesis; L-asparagine biosynthesis; L-asparagine from L-aspartate (ammonia route): step 1/1. The sequence is that of Aspartate--ammonia ligase from Lactobacillus delbrueckii subsp. bulgaricus (strain ATCC 11842 / DSM 20081 / BCRC 10696 / JCM 1002 / NBRC 13953 / NCIMB 11778 / NCTC 12712 / WDCM 00102 / Lb 14).